Here is a 110-residue protein sequence, read N- to C-terminus: Large ribosomal subunit protein uL22 (110 aa).

This sequence belongs to the universal ribosomal protein uL22 family. As to quaternary structure, part of the 50S ribosomal subunit.

Its function is as follows. This protein binds specifically to 23S rRNA; its binding is stimulated by other ribosomal proteins, e.g. L4, L17, and L20. It is important during the early stages of 50S assembly. It makes multiple contacts with different domains of the 23S rRNA in the assembled 50S subunit and ribosome. In terms of biological role, the globular domain of the protein is located near the polypeptide exit tunnel on the outside of the subunit, while an extended beta-hairpin is found that lines the wall of the exit tunnel in the center of the 70S ribosome. In Shewanella baltica (strain OS223), this protein is Large ribosomal subunit protein uL22.